The following is a 512-amino-acid chain: 2-isopropylmalate synthase (512 aa).

One can recognise a Pyruvate carboxyltransferase domain in the interval 5–267; sequence LYIFDTTLRD…DSRVDATQIV (263 aa). Positions 14, 202, 204, and 238 each coordinate Mn(2+). The regulatory domain stretch occupies residues 393–512; it reads KLVSLKVVSE…EEKMNAQAAA (120 aa).

This sequence belongs to the alpha-IPM synthase/homocitrate synthase family. LeuA type 1 subfamily. In terms of assembly, homodimer. Requires Mn(2+) as cofactor.

It localises to the cytoplasm. It carries out the reaction 3-methyl-2-oxobutanoate + acetyl-CoA + H2O = (2S)-2-isopropylmalate + CoA + H(+). The protein operates within amino-acid biosynthesis; L-leucine biosynthesis; L-leucine from 3-methyl-2-oxobutanoate: step 1/4. Catalyzes the condensation of the acetyl group of acetyl-CoA with 3-methyl-2-oxobutanoate (2-ketoisovalerate) to form 3-carboxy-3-hydroxy-4-methylpentanoate (2-isopropylmalate). The protein is 2-isopropylmalate synthase of Chromobacterium violaceum (strain ATCC 12472 / DSM 30191 / JCM 1249 / CCUG 213 / NBRC 12614 / NCIMB 9131 / NCTC 9757 / MK).